The chain runs to 430 residues: Adenylosuccinate synthetase (430 aa).

Residues 12–18 and 40–42 each bind GTP; these read GDEGKGK and GHT. The active-site Proton acceptor is D13. The Mg(2+) site is built by D13 and G40. IMP is bound by residues 13–16, 38–41, T128, R142, Q223, T238, and R302; these read DEGK and NAGH. The Proton donor role is filled by H41. 298–304 provides a ligand contact to substrate; the sequence is TTTGRPR. GTP contacts are provided by residues R304, 330–332, and 412–414; these read LLD and SVG.

Belongs to the adenylosuccinate synthetase family. As to quaternary structure, homodimer. Mg(2+) is required as a cofactor.

The protein resides in the cytoplasm. The enzyme catalyses IMP + L-aspartate + GTP = N(6)-(1,2-dicarboxyethyl)-AMP + GDP + phosphate + 2 H(+). It functions in the pathway purine metabolism; AMP biosynthesis via de novo pathway; AMP from IMP: step 1/2. Its function is as follows. Plays an important role in the de novo pathway of purine nucleotide biosynthesis. Catalyzes the first committed step in the biosynthesis of AMP from IMP. In Listeria monocytogenes serotype 4b (strain CLIP80459), this protein is Adenylosuccinate synthetase.